Consider the following 324-residue polypeptide: Holliday junction branch migration complex subunit RuvB (324 aa).

The tract at residues 1–168 is large ATPase domain (RuvB-L); it reads MEDLALRPKT…FGIVEHLEYY (168 aa). ATP-binding positions include leucine 6, arginine 7, glycine 48, lysine 51, threonine 52, threonine 53, 115–117, arginine 158, tyrosine 168, and arginine 205; that span reads EDF. Threonine 52 is a binding site for Mg(2+). The interval 169-239 is small ATPAse domain (RuvB-S); it reads TPEELAQGVM…RALEALAALG (71 aa). Residues 242 to 324 are head domain (RuvB-H); the sequence is ELGLEKRDRE…PPPVGPLLEP (83 aa). DNA-binding residues include arginine 297 and arginine 302.

This sequence belongs to the RuvB family. In terms of assembly, homohexamer. Forms an RuvA(8)-RuvB(12)-Holliday junction (HJ) complex. HJ DNA is sandwiched between 2 RuvA tetramers; dsDNA enters through RuvA and exits via RuvB. An RuvB hexamer assembles on each DNA strand where it exits the tetramer. Each RuvB hexamer is contacted by two RuvA subunits (via domain III) on 2 adjacent RuvB subunits; this complex drives branch migration. In the full resolvosome a probable DNA-RuvA(4)-RuvB(12)-RuvC(2) complex forms which resolves the HJ.

The protein localises to the cytoplasm. The enzyme catalyses ATP + H2O = ADP + phosphate + H(+). The ATPase activity of RuvB is enhanced by RuvA. In terms of biological role, the RuvA-RuvB-RuvC complex processes Holliday junction (HJ) DNA during genetic recombination and DNA repair, while the RuvA-RuvB complex plays an important role in the rescue of blocked DNA replication forks via replication fork reversal (RFR). RuvA specifically binds to HJ cruciform DNA, conferring on it an open structure. The RuvB hexamer acts as an ATP-dependent pump, pulling dsDNA into and through the RuvAB complex. RuvB forms 2 homohexamers on either side of HJ DNA bound by 1 or 2 RuvA tetramers; 4 subunits per hexamer contact DNA at a time. Coordinated motions by a converter formed by DNA-disengaged RuvB subunits stimulates ATP hydrolysis and nucleotide exchange. Immobilization of the converter enables RuvB to convert the ATP-contained energy into a lever motion, pulling 2 nucleotides of DNA out of the RuvA tetramer per ATP hydrolyzed, thus driving DNA branch migration. The RuvB motors rotate together with the DNA substrate, which together with the progressing nucleotide cycle form the mechanistic basis for DNA recombination by continuous HJ branch migration. Branch migration allows RuvC to scan DNA until it finds its consensus sequence, where it cleaves and resolves cruciform DNA. Functionally, has Mg(2+)-, DNA-dependent ATPase activity; dsDNA and supercoiled DNA but not ssDNA stimulate activity. Binds to linear dsDNA in the absence of ATP or ATP-gamma-S. This subunit can promote Holliday junction migration alone in vitro. Partially complements an E.coli deletion for UV sensitivity. This chain is Holliday junction branch migration complex subunit RuvB, found in Thermus thermophilus.